We begin with the raw amino-acid sequence, 461 residues long: Ig heavy chain C region, membrane-bound form (461 aa).

Residues 1-99 (ATPSPPTLYG…GESVWIKEIP (99 aa)) are CH1. Positions 100–205 (DCKGDKVHPT…TQSRNITGSQ (106 aa)) are CH2. Asn-164, Asn-200, Asn-245, Asn-275, Asn-374, Asn-411, Asn-415, and Asn-437 each carry an N-linked (GlcNAc...) asparagine glycan. A CH3 region spans residues 206 to 308 (VPCSCNDPVI…PLRASIHKEE (103 aa)). The CH4 stretch occupies residues 309-418 (VKDLREPSVS…IINRTVNKSS (110 aa)). Residues 438-458 (ASTFIILFFLSIFYRAAVTLV) form a helical membrane-spanning segment.

The protein localises to the cell membrane. The sequence is that of Ig heavy chain C region, membrane-bound form from Heterodontus francisci (Horn shark).